The sequence spans 397 residues: Ubiquitin-like modifier-activating enzyme 5 (397 aa).

Gly-76, Asp-97, Lys-120, Asn-143, and Asn-177 together coordinate ATP. Residues Cys-219 and Cys-222 each contribute to the Zn(2+) site. The active-site Glycyl thioester intermediate is Cys-243. The Zn(2+) site is built by Cys-296 and Cys-301. The UFM1-interacting sequence (UIS) signature appears at 327–339 (IVHEDNDWGIELV). Positions 340–370 (SETTEDELKAASGPVPDLPVGITVAYTIPNK) are linker. A UFC1-binding sequence (UFC) motif is present at residues 382-397 (ESEESLEDLMAKMRNL).

This sequence belongs to the ubiquitin-activating E1 family. UBA5 subfamily. As to quaternary structure, homodimer; homodimerization is required for UFM1 activation. Interacts (via UIS motif) with UFM1; binds UFM1 via a trans-binding mechanism in which UFM1 interacts with distinct sites in both subunits of the UBA5 homodimer. Interacts (via C-terminus) with UFC1.

It localises to the cytoplasm. The protein resides in the nucleus. It is found in the endoplasmic reticulum membrane. The protein localises to the golgi apparatus. Functionally, E1-like enzyme which specifically catalyzes the first step in ufmylation. Activates UFM1 by first adenylating its C-terminal glycine residue with ATP, and thereafter linking this residue to the side chain of a cysteine residue in E1, yielding a UFM1-E1 thioester and free AMP. Activates UFM1 via a trans-binding mechanism, in which UFM1 interacts with distinct sites in both subunits of the UBA5 homodimer. Trans-binding also promotes stabilization of the UBA5 homodimer, and enhances ATP-binding. Transfer of UFM1 from UBA5 to the E2-like enzyme UFC1 also takes place using a trans mechanism. Ufmylation plays a key role in various processes, such as ribosome recycling, response to DNA damage, interferon response or reticulophagy (also called ER-phagy). In Gallus gallus (Chicken), this protein is Ubiquitin-like modifier-activating enzyme 5.